A 225-amino-acid polypeptide reads, in one-letter code: ATP-dependent Clp protease proteolytic subunit (225 aa).

Serine 126 acts as the Nucleophile in catalysis. Histidine 151 is a catalytic residue.

Belongs to the peptidase S14 family. As to quaternary structure, fourteen ClpP subunits assemble into 2 heptameric rings which stack back to back to give a disk-like structure with a central cavity, resembling the structure of eukaryotic proteasomes.

It is found in the cytoplasm. The enzyme catalyses Hydrolysis of proteins to small peptides in the presence of ATP and magnesium. alpha-casein is the usual test substrate. In the absence of ATP, only oligopeptides shorter than five residues are hydrolyzed (such as succinyl-Leu-Tyr-|-NHMec, and Leu-Tyr-Leu-|-Tyr-Trp, in which cleavage of the -Tyr-|-Leu- and -Tyr-|-Trp bonds also occurs).. In terms of biological role, cleaves peptides in various proteins in a process that requires ATP hydrolysis. Has a chymotrypsin-like activity. Plays a major role in the degradation of misfolded proteins. This is ATP-dependent Clp protease proteolytic subunit from Psychrobacter arcticus (strain DSM 17307 / VKM B-2377 / 273-4).